A 956-amino-acid polypeptide reads, in one-letter code: Translation initiation factor IF-2 (956 aa).

Positions Ser33–Leu370 are disordered. Polar residues predominate over residues Ile46–Ala60. Residues Ala63 to Ala73 show a composition bias toward basic and acidic residues. Over residues Ala76 to Ser100 the composition is skewed to low complexity. 3 stretches are compositionally biased toward basic and acidic residues: residues Phe112 to Ala125, Ser134 to Gln143, and Asn179 to Arg192. The span at Arg199–Ala213 shows a compositional bias: low complexity. Composition is skewed to basic and acidic residues over residues Ala234 to Ala258 and Gln266 to Ser276. A compositionally biased stretch (low complexity) spans Ala277 to Lys293. Basic and acidic residues predominate over residues Asn303–Lys320. Residues Ser325–Asn343 show a composition bias toward low complexity. Residues Lys344–Asn354 are compositionally biased toward basic residues. In terms of domain architecture, tr-type G spans Glu457 to Lys626. The interval Gly466–Thr473 is G1. Gly466–Thr473 is a binding site for GTP. The interval Gly491–His495 is G2. A G3 region spans residues Asp512–Gly515. GTP-binding positions include Asp512–His516 and Asn566–Asp569. Residues Asn566–Asp569 form a G4 region. The G5 stretch occupies residues Ser602–Lys604.

Belongs to the TRAFAC class translation factor GTPase superfamily. Classic translation factor GTPase family. IF-2 subfamily.

The protein resides in the cytoplasm. In terms of biological role, one of the essential components for the initiation of protein synthesis. Protects formylmethionyl-tRNA from spontaneous hydrolysis and promotes its binding to the 30S ribosomal subunits. Also involved in the hydrolysis of GTP during the formation of the 70S ribosomal complex. The polypeptide is Translation initiation factor IF-2 (Streptococcus equi subsp. equi (strain 4047)).